A 229-amino-acid polypeptide reads, in one-letter code: Ribonuclease 3 (229 aa).

In terms of domain architecture, RNase III spans 4 to 133 (WEELQESVGF…FIGALYLDNG (130 aa)). Glu46 contributes to the Mg(2+) binding site. Asp50 is an active-site residue. Mg(2+) contacts are provided by Asp119 and Glu122. Glu122 is a catalytic residue. Positions 159–228 (DYKTQLQEIV…AQFAINQLTH (70 aa)) constitute a DRBM domain.

The protein belongs to the ribonuclease III family. As to quaternary structure, homodimer. Mg(2+) serves as cofactor.

It localises to the cytoplasm. The enzyme catalyses Endonucleolytic cleavage to 5'-phosphomonoester.. Functionally, digests double-stranded RNA. Involved in the processing of primary rRNA transcript to yield the immediate precursors to the large and small rRNAs (23S and 16S). Processes some mRNAs, and tRNAs when they are encoded in the rRNA operon. Processes pre-crRNA and tracrRNA of type II CRISPR loci if present in the organism. In Listeria innocua serovar 6a (strain ATCC BAA-680 / CLIP 11262), this protein is Ribonuclease 3.